The sequence spans 361 residues: Probable mannose-1-phosphate guanylyltransferase 3 (361 aa).

GDP-alpha-D-mannose contacts are provided by Leu6 and Val7. Diphosphate is bound by residues Gly9, Gly11, Thr12, Arg13, and Lys23. The GDP-alpha-D-mannose site is built by Gly85, Asn109, Asp111, Gly146, and Asn173.

It belongs to the transferase hexapeptide repeat family.

It carries out the reaction alpha-D-mannose 1-phosphate + GTP + H(+) = GDP-alpha-D-mannose + diphosphate. It functions in the pathway nucleotide-sugar biosynthesis; GDP-alpha-D-mannose biosynthesis; GDP-alpha-D-mannose from alpha-D-mannose 1-phosphate (GTP route): step 1/1. Functionally, catalyzes a reaction of the Smirnoff-Wheeler pathway, the major route to ascorbate biosynthesis in plants. The sequence is that of Probable mannose-1-phosphate guanylyltransferase 3 from Oryza sativa subsp. japonica (Rice).